Reading from the N-terminus, the 394-residue chain is Elongation factor Tu (394 aa).

One can recognise a tr-type G domain in the interval K10–V204. The G1 stretch occupies residues G19–T26. A GTP-binding site is contributed by G19 to T26. Mg(2+) is bound at residue T26. The tract at residues G60–S64 is G2. Residues D81 to G84 form a G3 region. Residues D81–H85 and N136–D139 each bind GTP. Residues N136–D139 form a G4 region. Positions S174 to L176 are G5.

The protein belongs to the TRAFAC class translation factor GTPase superfamily. Classic translation factor GTPase family. EF-Tu/EF-1A subfamily. Monomer.

It is found in the cytoplasm. It catalyses the reaction GTP + H2O = GDP + phosphate + H(+). GTP hydrolase that promotes the GTP-dependent binding of aminoacyl-tRNA to the A-site of ribosomes during protein biosynthesis. The polypeptide is Elongation factor Tu (Rickettsia rhipicephali).